Here is a 330-residue protein sequence, read N- to C-terminus: Virulence plasmid integrase pGP8-D (330 aa).

The region spanning 39–124 is the Core-binding (CB) domain; that stretch reads FSLFEVIMHW…SYISLTRFLN (86 aa). The 176-residue stretch at 152–327 folds into the Tyr recombinase domain; that stretch reads VKTNAMNRLQ…SREDNASKKM (176 aa). Residues R189, K214, H279, R282, and H305 contribute to the active site. Y314 (O-(3'-phospho-DNA)-tyrosine intermediate) is an active-site residue.

Belongs to the 'phage' integrase family.

The chain is Virulence plasmid integrase pGP8-D from Chlamydia muridarum (strain MoPn / Nigg).